A 644-amino-acid chain; its full sequence is MNVTIEGQVFDVQSGVSCRDALKGALSGKKFKNVVACRCNGTPLDLTATVPADTTTIEPVFADSPEGIELIRHSAAHIMAEAVQKLFPGVKVTIGPAIDSGFYYDFDYERPFSVDDLEAIEAEMQKIVAAAHPFTRTEMTKDEAVALFEGMGEAYKVEIVRDIPADTVSVYRSGDFVDLCRGPHIPDTSFVKAFKLLSVAGAYWRGDEKNRMLSRVYGTAFADPKALKDHLHQIEEAKRRDHRKLGQQLDLFAFHEDVAPGMVYWHPKGMLLRTILEDFLRKEHLKRGYELVQGPQLLRREVWEKSGHYDNYRENMYFTVIDDNAYGVKPMNCVSHMLIYKSHLRSYRDLPRRMFELGVVHRHEKSGVLHGLLRVRQFTQDDAHILCRPDQLEAEIIGVIALVRDLMGLFGFDYRIVISTRPEKSIGSDEDWDRATNALIGAVATAGLSHTINEGDGAFYGPKIDIKVTDAIGREWQLSTIQVDFTLPDRFDLVYIGQDGERHRPVMVHRAILGSLERFIGVLTEHFAGAFPTWIVPVQARLLTVTDAQNDFAMGARDQLVAAGLRVEADTRNEKLGYKVREAQLEKIPYILVVGDKEVEAGGVNVRLRNGENLGLKTLAEVAEMIRADCQEPFKRGGMSYSFS.

Residues 1 to 61 (MNVTIEGQVF…ADTTTIEPVF (61 aa)) enclose the TGS domain. The catalytic stretch occupies residues 241 to 532 (DHRKLGQQLD…LTEHFAGAFP (292 aa)). 3 residues coordinate Zn(2+): Cys-333, His-384, and His-509.

Belongs to the class-II aminoacyl-tRNA synthetase family. As to quaternary structure, homodimer. It depends on Zn(2+) as a cofactor.

Its subcellular location is the cytoplasm. It carries out the reaction tRNA(Thr) + L-threonine + ATP = L-threonyl-tRNA(Thr) + AMP + diphosphate + H(+). Functionally, catalyzes the attachment of threonine to tRNA(Thr) in a two-step reaction: L-threonine is first activated by ATP to form Thr-AMP and then transferred to the acceptor end of tRNA(Thr). Also edits incorrectly charged L-seryl-tRNA(Thr). The sequence is that of Threonine--tRNA ligase from Nitratidesulfovibrio vulgaris (strain DSM 19637 / Miyazaki F) (Desulfovibrio vulgaris).